A 64-amino-acid polypeptide reads, in one-letter code: DNA gyrase inhibitor YacG (64 aa).

Zn(2+)-binding residues include Cys9, Cys12, Cys28, and Cys32. The tract at residues 42 to 64 (DEENAIPGAPDMSDSDGWSEEQY) is disordered. The span at 54–64 (SDSDGWSEEQY) shows a compositional bias: acidic residues.

It belongs to the DNA gyrase inhibitor YacG family. As to quaternary structure, interacts with GyrB. Zn(2+) serves as cofactor.

Inhibits all the catalytic activities of DNA gyrase by preventing its interaction with DNA. Acts by binding directly to the C-terminal domain of GyrB, which probably disrupts DNA binding by the gyrase. The polypeptide is DNA gyrase inhibitor YacG (Vibrio vulnificus (strain YJ016)).